Here is a 611-residue protein sequence, read N- to C-terminus: mRNA export factor GLE1 (611 aa).

2 disordered regions span residues 69–94 (SEDE…SQIC) and 220–243 (KIRS…EKIR). Residues 71–89 (DEMESDEGEESDDEEEEED) show a composition bias toward acidic residues.

It belongs to the GLE1 family. In terms of assembly, part of the nuclear pore complex (NPC). The NPC has an eight-fold symmetrical structure comprising a central transport channel and two rings, the cytoplasmic and nuclear rings, to which eight filaments are attached. The cytoplasmic filaments have loose ends, while the nuclear filaments are joined in a distal ring, forming a nuclear basket. NPCs are highly dynamic in configuration and composition, and can be devided in 3 subcomplexes, the NUP62 subcomplex, the NUP107-160 subcomplex and the NUP93 subcomplex, containing approximately 30 different nucleoporin proteins.

Its subcellular location is the nucleus envelope. The protein resides in the nucleus. The protein localises to the nuclear pore complex. Required for seed viability. In Arabidopsis thaliana (Mouse-ear cress), this protein is mRNA export factor GLE1.